We begin with the raw amino-acid sequence, 397 residues long: Enoyl-[acyl-carrier-protein] reductase [NADH] (397 aa).

Residues 48 to 53, 74 to 75, 111 to 112, and 139 to 140 each bind NAD(+); these read GASTGY, FE, DA, and AA. Tyrosine 225 contacts substrate. The Proton donor role is filled by tyrosine 235. Residues lysine 244 and 273–275 each bind NAD(+); that span reads VVT.

This sequence belongs to the TER reductase family. In terms of assembly, monomer.

The catalysed reaction is a 2,3-saturated acyl-[ACP] + NAD(+) = a (2E)-enoyl-[ACP] + NADH + H(+). The protein operates within lipid metabolism; fatty acid biosynthesis. Functionally, involved in the final reduction of the elongation cycle of fatty acid synthesis (FAS II). Catalyzes the reduction of a carbon-carbon double bond in an enoyl moiety that is covalently linked to an acyl carrier protein (ACP). The chain is Enoyl-[acyl-carrier-protein] reductase [NADH] from Burkholderia pseudomallei (strain 1710b).